The chain runs to 358 residues: COP9 signalosome complex subunit 5b (358 aa).

Residue Met-1 is modified to N-acetylmethionine. The 138-residue stretch at 59-196 (VKISALALLK…IGAFRTYSKG (138 aa)) folds into the MPN domain. 3 residues coordinate Zn(2+): His-142, His-144, and Asp-155. Positions 142–155 (HSHPGYGCWLSGID) match the JAMM motif motif. A compositionally biased stretch (polar residues) spans 338 to 349 (MRQSNNKSPTDS). The tract at residues 338–358 (MRQSNNKSPTDSSDPDPMITY) is disordered.

The protein belongs to the peptidase M67A family. CSN5 subfamily. Component of the CSN complex, probably composed of CSN1, CSN2, CSN3, CSN4, CSN5 (CSN5A or CSN5B), CSN6 (CSN6A or CSN6B), CSN7 and CSN8. CSN5A or CSN5B are present within distinct CSN complexes each containing only one copy of CSN5. Interacts with itself. In the complex, it is located in the center and probably interacts directly with CSN4 and CSN6A or CSN6B. Also exists as monomeric form. Interacts with CYT1 in vitro and in planta. Interacts with FLZ3. Requires a divalent metal cation as cofactor. In terms of tissue distribution, ubiquitously expressed. Highly expressed in flowers and roots. Expressed at lower level in seedlings and siliques.

It is found in the cytoplasm. Its subcellular location is the nucleus. Probable protease subunit of the COP9 signalosome complex (CSN), a complex involved in various cellular and developmental processes such as photomorphogenesis and auxin and jasmonate responses. The CSN complex is an essential regulator of the ubiquitin (Ubl) conjugation pathway by mediating the deneddylation of the cullin subunits of the SCF-type E3 ligase complexes, leading to decrease the Ubl ligase activity of SCF. In the complex, it probably acts as the catalytic center that mediates the cleavage of Nedd8 from cullins. It however has no metalloprotease activity by itself and requires the other subunits of the CSN complex. The CSN complex is involved in repression of photomorphogenesis in darkness by regulating the activity of COP1-containing Ubl ligase complexes. The complex is also required for degradation of PSIAA6 by regulating the activity of the Ubl ligase SCF-TIR complex. Not involved in CSN's deneddylation/derubylation activity. Essential for the structural integrity of the CSN holocomplex. The protein is COP9 signalosome complex subunit 5b of Arabidopsis thaliana (Mouse-ear cress).